A 160-amino-acid chain; its full sequence is Heat shock protein beta-6 (160 aa).

Residues 1–72 are involved in stabilization of the HSPB1:HSBP6 heterodimer; sequence MEIPVPVQPS…PVAQVPTDPG (72 aa). At serine 16 the chain carries Phosphoserine; by PKA. Residues 55–160 form the sHSP domain; it reads LRAPSVALPV…AQAPPPAAAK (106 aa). A Deamidated glutamine modification is found at glutamine 66.

This sequence belongs to the small heat shock protein (HSP20) family. Homodimer. Small heat shock proteins form high molecular mass oligomers containing variable number of monomers; these oligomers display a very flexible quaternary structure easily exchanging their subunits. Heterooligomer with HSPB1; formed through oligomerization of HSPB1:HSBP6 dimers; subunit exchange leads to formation of at least two different heterooligomeric complexes, differing in variable quantities of HSPB1 and HSPB6 homodimers in addition to HSPB1:HSPB6 heterodimers. Heterooligomer with CRYAB; large heterooligomers consist of CRYAB homodimers and HSPB5:HSPB6 heterodimers but lacking HSPB6 homodimers. Interacts with BAG3. Interacts (phosphorylated) with YWHAZ. Interacts with PDE4A and PDE4D; required for maintenance of the non-phosphorylated state of HSPB6 under basal conditions. Interacts with KDR. Interacts with PRKD1. The N-terminus is blocked. Post-translationally, phosphorylated at Ser-16 by PKA and probably PKD1K; required to protect cardiomyocytes from apoptosis.

The protein resides in the cytoplasm. It is found in the nucleus. The protein localises to the secreted. Functionally, small heat shock protein which functions as a molecular chaperone probably maintaining denatured proteins in a folding-competent state. Seems to have versatile functions in various biological processes. Plays a role in regulating muscle function such as smooth muscle vasorelaxation and cardiac myocyte contractility. May regulate myocardial angiogenesis implicating KDR. Overexpression mediates cardioprotection and angiogenesis after induced damage. Stabilizes monomeric YWHAZ thereby supporting YWHAZ chaperone-like activity. The polypeptide is Heat shock protein beta-6 (HSPB6) (Homo sapiens (Human)).